An 860-amino-acid polypeptide reads, in one-letter code: SH2 domain-containing protein 3C (860 aa).

Ser22 carries the phosphoserine modification. 2 disordered regions span residues Glu51–Leu117 and Pro130–Gly180. A compositionally biased stretch (basic and acidic residues) spans Glu162 to Gly175. The SH2 domain maps to Trp220–Val319. Phosphotyrosine occurs at positions 278 and 283. The segment at Gly335 to Asp537 is disordered. Phosphoserine is present on Ser359. Low complexity-rich tracts occupy residues Ser405–Ser420, Ala427–Ala443, and Ser479–Pro490. Position 440 is a phosphoserine (Ser440). In terms of domain architecture, Ras-GEF spans Asp586–Ala854. Tyr793 carries the post-translational modification Phosphotyrosine.

As to quaternary structure, component of a complex comprised of SH2D3C, BCAR1/CAS, and CRK. Within the complex, interacts with CRK and (via C-terminus) with BCAR1/CAS (via C-terminus). Interacts with NEDD9/HEF1. Interacts with EPHB2. In terms of assembly, interacts with NEDD9/HEF1. Interacts with BCAR1/CAS. Interacts with PTK2B. Interacts (via C-terminus) with BCAR1/CAS (via C-terminus). Interacts with IGF1. Phosphorylated by MAPK/ERK upon T-cell receptor stimulation in T-cells. Ubiquitously expressed.

The protein localises to the cytoplasm. It is found in the cell membrane. Its subcellular location is the cell projection. It localises to the axon. The protein resides in the ruffle membrane. Its function is as follows. Acts as an adapter protein that mediates cell signaling pathways involved in cellular functions such as cell adhesion and migration, tissue organization, and the regulation of the immune response. Plays a role in integrin-mediated cell adhesion through BCAR1-CRK-RAPGEF1 signaling and activation of the small GTPase RAP1. Promotes cell migration and invasion through the extracellular matrix. Required for marginal zone B-cell development and thymus-independent type 2 immune responses. Mediates migration and adhesion of B cells in the splenic marginal zone via promoting hyperphosphorylation of NEDD9/CASL. Plays a role in CXCL13-induced chemotaxis of B-cells. Plays a role in the migration of olfactory sensory neurons (OSNs) into the forebrain and the innervation of the olfactory bulb by the OSN axons during development. Required for the efficient tyrosine phosphorylation of BCAR1 in OSN axons. Functionally, important regulator of chemokine-induced, integrin-mediated T lymphocyte adhesion and migration, acting upstream of RAP1. Required for tissue-specific adhesion of T lymphocytes to peripheral tissues. Required for basal and CXCL2 stimulated serine-threonine phosphorylation of NEDD9. May be involved in the regulation of T-cell receptor-mediated IL2 production through the activation of the JNK pathway in T-cells. In terms of biological role, may be involved in the BCAR1/CAS-mediated JNK activation pathway. The chain is SH2 domain-containing protein 3C (SH2D3C) from Homo sapiens (Human).